Here is a 393-residue protein sequence, read N- to C-terminus: tRNA(Met) cytidine acetate ligase (393 aa).

Residues glycine 81, asparagine 142, and arginine 167 each contribute to the ATP site.

The protein belongs to the TmcAL family.

It is found in the cytoplasm. It carries out the reaction cytidine(34) in elongator tRNA(Met) + acetate + ATP = N(4)-acetylcytidine(34) in elongator tRNA(Met) + AMP + diphosphate. Functionally, catalyzes the formation of N(4)-acetylcytidine (ac(4)C) at the wobble position of elongator tRNA(Met), using acetate and ATP as substrates. First activates an acetate ion to form acetyladenylate (Ac-AMP) and then transfers the acetyl group to tRNA to form ac(4)C34. This Bacillus thuringiensis subsp. konkukian (strain 97-27) protein is tRNA(Met) cytidine acetate ligase.